The primary structure comprises 101 residues: RNA-binding protein Hfq (101 aa).

Residues 9 to 68 (DPFLNALRRERVPVSIYLVNGIKLQGQVESFDQFVILLKNTVSQMVYKHAISTVVPSPPV) enclose the Sm domain. A disordered region spans residues 62–101 (VVPSPPVSHHSNTPSGSTNNYHGSNPSAPQQPQQDSDDAE). Residues 70–86 (HHSNTPSGSTNNYHGSN) are compositionally biased toward polar residues.

Belongs to the Hfq family. Homohexamer.

RNA chaperone that binds small regulatory RNA (sRNAs) and mRNAs to facilitate mRNA translational regulation in response to envelope stress, environmental stress and changes in metabolite concentrations. Also binds with high specificity to tRNAs. The protein is RNA-binding protein Hfq of Yersinia pestis (strain Pestoides F).